Consider the following 97-residue polypeptide: MTKMSKGPRSGSRRVMTKSVKNKGMPKVNEMMKTFEVGDRAAIVINSAVPDGMPHHDFQGITGVITGMQGSCYILSFKVGNVEKKVIAAPVHLRKVQ.

The segment at 1–23 is disordered; the sequence is MTKMSKGPRSGSRRVMTKSVKNK.

Belongs to the eukaryotic ribosomal protein eL21 family.

The chain is Large ribosomal subunit protein eL21 from Picrophilus torridus (strain ATCC 700027 / DSM 9790 / JCM 10055 / NBRC 100828 / KAW 2/3).